The following is a 221-amino-acid chain: uncharacterized protein (221 aa).

Transmembrane regions (helical) follow at residues Y33–I55, F70–V92, L99–I121, Y125–L147, Y154–I176, and I186–I208.

It localises to the cell membrane. This is an uncharacterized protein from Aquifex aeolicus (strain VF5).